The sequence spans 347 residues: UDP-3-O-acylglucosamine N-acyltransferase (347 aa).

The active-site Proton acceptor is histidine 248.

Belongs to the transferase hexapeptide repeat family. LpxD subfamily. Homotrimer.

It carries out the reaction a UDP-3-O-[(3R)-3-hydroxyacyl]-alpha-D-glucosamine + a (3R)-hydroxyacyl-[ACP] = a UDP-2-N,3-O-bis[(3R)-3-hydroxyacyl]-alpha-D-glucosamine + holo-[ACP] + H(+). The protein operates within bacterial outer membrane biogenesis; LPS lipid A biosynthesis. Functionally, catalyzes the N-acylation of UDP-3-O-acylglucosamine using 3-hydroxyacyl-ACP as the acyl donor. Is involved in the biosynthesis of lipid A, a phosphorylated glycolipid that anchors the lipopolysaccharide to the outer membrane of the cell. The polypeptide is UDP-3-O-acylglucosamine N-acyltransferase (Parasynechococcus marenigrum (strain WH8102)).